The sequence spans 138 residues: Cysteine desulfuration protein SufE (138 aa).

Residue Cys-51 is the Cysteine persulfide intermediate of the active site.

Belongs to the SufE family. In terms of assembly, homodimer. Interacts with SufS.

The protein resides in the cytoplasm. The protein operates within cofactor biosynthesis; iron-sulfur cluster biosynthesis. Functionally, participates in cysteine desulfuration mediated by SufS. Cysteine desulfuration mobilizes sulfur from L-cysteine to yield L-alanine and constitutes an essential step in sulfur metabolism for biosynthesis of a variety of sulfur-containing biomolecules. Functions as a sulfur acceptor for SufS, by mediating the direct transfer of the sulfur atom from the S-sulfanylcysteine of SufS, an intermediate product of cysteine desulfuration process. The polypeptide is Cysteine desulfuration protein SufE (Escherichia coli O81 (strain ED1a)).